Consider the following 434-residue polypeptide: Putative magnesium transporter MRS2-D (434 aa).

Disordered stretches follow at residues 1-21, 126-171, and 279-311; these read MAAR…AAGE, AASP…DGEA, and EASE…AGGG. Residues 9–21 show a composition bias toward low complexity; it reads AAGAGAPAPAAGE. Over residues 279 to 291 the composition is skewed to basic and acidic residues; that stretch reads EASELEDHSSRDE. Transmembrane regions (helical) follow at residues 367–387 and 405–425; these read GILL…TGVF and FPCA…AALL.

This sequence belongs to the CorA metal ion transporter (MIT) (TC 1.A.35.5) family.

It is found in the membrane. In terms of biological role, putative magnesium transporter. This Oryza sativa subsp. indica (Rice) protein is Putative magnesium transporter MRS2-D (MRS2-D).